The sequence spans 422 residues: DNA-binding transcriptional activator AdeR (422 aa).

The protein belongs to the CdaR family.

In terms of biological role, activates ald expression in response to alanine availability and is important for normal sporulation in B.subtilis. This Bacillus subtilis (strain 168) protein is DNA-binding transcriptional activator AdeR.